The sequence spans 928 residues: G-protein coupled receptor family C group 6 member A (928 aa).

Positions 1–20 (MALLITVVTCFMIILDTSQS) are cleaved as a signal peptide. Residues 21 to 594 (CHTPDDFVAI…EYLDWDDSLA (574 aa)) are Extracellular-facing. N-linked (GlcNAc...) asparagine glycosylation is found at asparagine 332, asparagine 555, and asparagine 567. Residues 595–615 (LLLIALSLLGIAFVLAIGIIF) form a helical membrane-spanning segment. Residues 616-630 (TRNLKTPVVKSSGGL) are Cytoplasmic-facing. A helical membrane pass occupies residues 631–651 (VVCYVMLICHALNFASTGFFI). The Extracellular segment spans residues 652-669 (GEPQDFACKTRQTLFGVS). A helical transmembrane segment spans residues 670–690 (FTLCVSCILTKSLKILLAFSF). Residues 691-706 (DPKLTMFLKCLYRPVP) lie on the Cytoplasmic side of the membrane. Residues 707–727 (IVLTCTGIQVVICTLWLVLAA) form a helical membrane-spanning segment. The Extracellular segment spans residues 728 to 750 (PSVEENISLPRVIILECEEGSAL). Residues 751 to 771 (AFGTMLGYITVLAFICFVFAF) traverse the membrane as a helical segment. Residues 772–784 (KGRKLPENYNEAK) lie on the Cytoplasmic side of the membrane. Residues 785–805 (FLTFGMLIYFIAWITFIPVYT) form a helical membrane-spanning segment. Over 806 to 812 (TTFGKYL) the chain is Extracellular. Residues 813-833 (PAVEIIVILISNYGILCCIFF) form a helical membrane-spanning segment. Residues 834 to 928 (PKCYIILCKQ…TLRQKRSSSI (95 aa)) are Cytoplasmic-facing.

The protein belongs to the G-protein coupled receptor 3 family. As to quaternary structure, homodimer; disulfide-linked. N-glycosylated. As to expression, expressed at high level in liver, lung, spleen and heart. Expressed at lower level in kidney, skeletal muscle and brain. Expressed in 7 dpc, 11 dpc, 15 dpc and 17 dpc embryos.

It localises to the cell membrane. Functionally, receptor activated by multiple ligands, including osteocalcin (BGLAP), basic amino acids, and various cations. Activated by amino acids with a preference for basic amino acids such as L-Lys, L-Arg and L-ornithine but also by small and polar amino acids. The L-alpha amino acids respond is augmented by divalent cations Ca(2+) and Mg(2+). Seems to act through a G(q)/G(11) and G(i)-coupled pathway. Regulates testosterone production by acting as a ligand for uncarboxylated osteocalcin hormone: osteocalcin-binding at the surface of Leydig cells initiates a signaling response that promotes the expression of enzymes required for testosterone synthesis in a CREB-dependent manner. Mediates the non-genomic effects of androgens in multiple tissue. May coordinate nutritional and hormonal anabolic signals through the sensing of extracellular amino acids, osteocalcin, divalent ions and its responsiveness to anabolic steroids. The protein is G-protein coupled receptor family C group 6 member A (Gprc6a) of Mus musculus (Mouse).